Reading from the N-terminus, the 615-residue chain is Dihydroxy-acid dehydratase (615 aa).

Residue Asp-81 coordinates Mg(2+). Cys-122 is a [2Fe-2S] cluster binding site. Positions 123 and 124 each coordinate Mg(2+). The residue at position 124 (Lys-124) is an N6-carboxylysine. Cys-193 is a [2Fe-2S] cluster binding site. Glu-489 lines the Mg(2+) pocket. Ser-515 serves as the catalytic Proton acceptor.

It belongs to the IlvD/Edd family. Homodimer. It depends on [2Fe-2S] cluster as a cofactor. The cofactor is Mg(2+).

The enzyme catalyses (2R)-2,3-dihydroxy-3-methylbutanoate = 3-methyl-2-oxobutanoate + H2O. It catalyses the reaction (2R,3R)-2,3-dihydroxy-3-methylpentanoate = (S)-3-methyl-2-oxopentanoate + H2O. The protein operates within amino-acid biosynthesis; L-isoleucine biosynthesis; L-isoleucine from 2-oxobutanoate: step 3/4. It participates in amino-acid biosynthesis; L-valine biosynthesis; L-valine from pyruvate: step 3/4. Its function is as follows. Functions in the biosynthesis of branched-chain amino acids. Catalyzes the dehydration of (2R,3R)-2,3-dihydroxy-3-methylpentanoate (2,3-dihydroxy-3-methylvalerate) into 2-oxo-3-methylpentanoate (2-oxo-3-methylvalerate) and of (2R)-2,3-dihydroxy-3-methylbutanoate (2,3-dihydroxyisovalerate) into 2-oxo-3-methylbutanoate (2-oxoisovalerate), the penultimate precursor to L-isoleucine and L-valine, respectively. The protein is Dihydroxy-acid dehydratase of Pseudomonas syringae pv. syringae (strain B728a).